Consider the following 385-residue polypeptide: Trichodiene synthase (385 aa).

It belongs to the trichodiene synthase family.

It catalyses the reaction (2E,6E)-farnesyl diphosphate = trichodiene + diphosphate. It participates in sesquiterpene biosynthesis; trichothecene biosynthesis. TS is a member of the terpene cyclase group of enzymes. It catalyzes the isomerization and cyclization of farnesyl pyro-phosphate to form trichodiene, the first cyclic intermediate in the biosynthetic pathway for trichothecenes. It serves to branch trichothecene biosynthesis from the isoprenoid pathway. The polypeptide is Trichodiene synthase (TRI5) (Paramyrothecium roridum (Myrothecium leaf spot fungus)).